The primary structure comprises 323 residues: Tyrosine--tRNA ligase (323 aa).

Residue Tyr-36 coordinates L-tyrosine. A 'HIGH' region motif is present at residues Pro-41–His-49. L-tyrosine is bound by residues Tyr-158, Gln-162, Asp-165, and Gln-180. The short motif at Lys-214–Ser-218 is the 'KMSKS' region element. Ser-217 serves as a coordination point for ATP.

It belongs to the class-I aminoacyl-tRNA synthetase family. TyrS type 3 subfamily. In terms of assembly, homodimer.

The protein resides in the cytoplasm. It catalyses the reaction tRNA(Tyr) + L-tyrosine + ATP = L-tyrosyl-tRNA(Tyr) + AMP + diphosphate + H(+). Functionally, catalyzes the attachment of tyrosine to tRNA(Tyr) in a two-step reaction: tyrosine is first activated by ATP to form Tyr-AMP and then transferred to the acceptor end of tRNA(Tyr). The polypeptide is Tyrosine--tRNA ligase (Archaeoglobus fulgidus (strain ATCC 49558 / DSM 4304 / JCM 9628 / NBRC 100126 / VC-16)).